The following is a 542-amino-acid chain: Protein XP55 (542 aa).

The signal sequence occupies residues 1–33 (MTARRTRWTRRTDRSLPIRSAAAAVAFAAGATA). Cysteine 34 carries N-palmitoyl cysteine lipidation. A lipid anchor (S-diacylglycerol cysteine) is attached at cysteine 34. The disordered stretch occupies residues 519–542 (LEGRTNTASPAGPGGTSRTGGRKK).

The protein belongs to the bacterial solute-binding protein 5 family.

The protein localises to the cell membrane. Required for transport of an unidentified substrate. In Streptomyces lividans, this protein is Protein XP55 (xp55).